Consider the following 304-residue polypeptide: Recombination-associated protein RdgC (304 aa).

The protein belongs to the RdgC family.

Its subcellular location is the cytoplasm. It localises to the nucleoid. Functionally, may be involved in recombination. The sequence is that of Recombination-associated protein RdgC from Shewanella sp. (strain W3-18-1).